Consider the following 205-residue polypeptide: Thymidine kinase (205 aa).

ATP is bound by residues 9–16 and 87–90; these read SAMNAGKS and DECQ. Glu88 serves as the catalytic Proton acceptor. The Zn(2+) site is built by Cys145, Cys147, Cys182, and His185.

The protein belongs to the thymidine kinase family. In terms of assembly, homotetramer.

The protein localises to the cytoplasm. It catalyses the reaction thymidine + ATP = dTMP + ADP + H(+). This is Thymidine kinase from Shigella dysenteriae serotype 1 (strain Sd197).